A 491-amino-acid chain; its full sequence is Cholesterol 22-monohydroxylase CYP90B51 (491 aa).

Residues 6 to 26 (ITFYCLSSILSVLLIFIFILI) traverse the membrane as a helical segment. Position 437 (C437) interacts with heme.

Belongs to the cytochrome P450 family. As to expression, mainly expressed in leaves and seed pods and, to a lower extent, in flowers and stems.

It is found in the membrane. It catalyses the reaction cholesterol + reduced [NADPH--hemoprotein reductase] + O2 = (22S)-22-hydroxycholesterol + oxidized [NADPH--hemoprotein reductase] + H2O + H(+). It participates in steroid metabolism; cholesterol metabolism. In terms of biological role, canonical brassinosteroid (BR)-biosynthetic enzyme capable of converting cholesterol to 22S-hydroxycholesterol via sterol-C22 hydroxylation. This is Cholesterol 22-monohydroxylase CYP90B51 from Trigonella foenum-graecum (Fenugreek).